The primary structure comprises 93 residues: Small ribosomal subunit protein uS15 (93 aa).

Belongs to the universal ribosomal protein uS15 family. As to quaternary structure, part of the 30S ribosomal subunit. Forms a bridge to the 50S subunit in the 70S ribosome, contacting the 23S rRNA.

In terms of biological role, one of the primary rRNA binding proteins, it binds directly to 16S rRNA where it helps nucleate assembly of the platform of the 30S subunit by binding and bridging several RNA helices of the 16S rRNA. Forms an intersubunit bridge (bridge B4) with the 23S rRNA of the 50S subunit in the ribosome. This is Small ribosomal subunit protein uS15 from Ehrlichia canis (strain Jake).